Consider the following 80-residue polypeptide: ATP synthase subunit c (80 aa).

A run of 2 helical transmembrane segments spans residues 11 to 31 (IAAAMMMGLAAIGASIGIGIL) and 53 to 73 (FFIVMGLVDAIPMIAVGLGLY).

This sequence belongs to the ATPase C chain family. In terms of assembly, F-type ATPases have 2 components, F(1) - the catalytic core - and F(0) - the membrane proton channel. F(1) has five subunits: alpha(3), beta(3), gamma(1), delta(1), epsilon(1). F(0) has three main subunits: a(1), b(2) and c(10-14). The alpha and beta chains form an alternating ring which encloses part of the gamma chain. F(1) is attached to F(0) by a central stalk formed by the gamma and epsilon chains, while a peripheral stalk is formed by the delta and b chains.

Its subcellular location is the cell inner membrane. Functionally, f(1)F(0) ATP synthase produces ATP from ADP in the presence of a proton or sodium gradient. F-type ATPases consist of two structural domains, F(1) containing the extramembraneous catalytic core and F(0) containing the membrane proton channel, linked together by a central stalk and a peripheral stalk. During catalysis, ATP synthesis in the catalytic domain of F(1) is coupled via a rotary mechanism of the central stalk subunits to proton translocation. Its function is as follows. Key component of the F(0) channel; it plays a direct role in translocation across the membrane. A homomeric c-ring of between 10-14 subunits forms the central stalk rotor element with the F(1) delta and epsilon subunits. This Aeromonas hydrophila subsp. hydrophila (strain ATCC 7966 / DSM 30187 / BCRC 13018 / CCUG 14551 / JCM 1027 / KCTC 2358 / NCIMB 9240 / NCTC 8049) protein is ATP synthase subunit c.